A 382-amino-acid chain; its full sequence is Succinyl-diaminopimelate desuccinylase (382 aa).

Residue histidine 73 coordinates Zn(2+). Aspartate 75 is a catalytic residue. Aspartate 106 provides a ligand contact to Zn(2+). Glutamate 140 serves as the catalytic Proton acceptor. Glutamate 141, glutamate 169, and histidine 355 together coordinate Zn(2+).

It belongs to the peptidase M20A family. DapE subfamily. Homodimer. Requires Zn(2+) as cofactor. Co(2+) is required as a cofactor.

The catalysed reaction is N-succinyl-(2S,6S)-2,6-diaminopimelate + H2O = (2S,6S)-2,6-diaminopimelate + succinate. Its pathway is amino-acid biosynthesis; L-lysine biosynthesis via DAP pathway; LL-2,6-diaminopimelate from (S)-tetrahydrodipicolinate (succinylase route): step 3/3. Functionally, catalyzes the hydrolysis of N-succinyl-L,L-diaminopimelic acid (SDAP), forming succinate and LL-2,6-diaminopimelate (DAP), an intermediate involved in the bacterial biosynthesis of lysine and meso-diaminopimelic acid, an essential component of bacterial cell walls. The polypeptide is Succinyl-diaminopimelate desuccinylase (Cellvibrio japonicus (strain Ueda107) (Pseudomonas fluorescens subsp. cellulosa)).